A 249-amino-acid chain; its full sequence is Triosephosphate isomerase (249 aa).

Residues asparagine 12 and lysine 14 each coordinate substrate. Lysine 14 is subject to N6-acetyllysine. The residue at position 68 (tyrosine 68) is a 3'-nitrotyrosine. A Phosphoserine modification is found at serine 80. The active-site Electrophile is histidine 96. Serine 106 is modified (phosphoserine). Lysine 142 is covalently cross-linked (Glycyl lysine isopeptide (Lys-Gly) (interchain with G-Cter in SUMO1)). The residue at position 149 (lysine 149) is an N6-succinyllysine. Lysine 156 carries the N6-acetyllysine; alternate modification. Lysine 156 carries the post-translational modification N6-succinyllysine; alternate. A Phosphoserine modification is found at serine 159. The active-site Proton acceptor is the glutamate 166. Phosphothreonine is present on threonine 173. Lysine 194 is subject to N6-acetyllysine; alternate. At lysine 194 the chain carries N6-succinyllysine; alternate. At lysine 194 the chain carries N6-methyllysine; alternate. Residue serine 198 is modified to Phosphoserine. Tyrosine 209 bears the 3'-nitrotyrosine mark. The residue at position 212 (serine 212) is a Phosphoserine. A Phosphothreonine modification is found at threonine 214. Phosphoserine is present on serine 223. The residue at position 238 (lysine 238) is an N6-acetyllysine.

This sequence belongs to the triosephosphate isomerase family. In terms of assembly, homodimer.

Its subcellular location is the cytoplasm. The catalysed reaction is dihydroxyacetone phosphate = methylglyoxal + phosphate. It carries out the reaction D-glyceraldehyde 3-phosphate = dihydroxyacetone phosphate. Its pathway is carbohydrate degradation; glycolysis; D-glyceraldehyde 3-phosphate from glycerone phosphate: step 1/1. It functions in the pathway carbohydrate biosynthesis; gluconeogenesis. In terms of biological role, triosephosphate isomerase is an extremely efficient metabolic enzyme that catalyzes the interconversion between dihydroxyacetone phosphate (DHAP) and D-glyceraldehyde-3-phosphate (G3P) in glycolysis and gluconeogenesis. It is also responsible for the non-negligible production of methylglyoxal a reactive cytotoxic side-product that modifies and can alter proteins, DNA and lipids. This Macaca fascicularis (Crab-eating macaque) protein is Triosephosphate isomerase (TPI1).